The primary structure comprises 160 residues: S-ribosylhomocysteine lyase (160 aa).

The Fe cation site is built by histidine 57, histidine 61, and cysteine 127.

Belongs to the LuxS family. In terms of assembly, homodimer. Requires Fe cation as cofactor.

The enzyme catalyses S-(5-deoxy-D-ribos-5-yl)-L-homocysteine = (S)-4,5-dihydroxypentane-2,3-dione + L-homocysteine. Functionally, involved in the synthesis of autoinducer 2 (AI-2) which is secreted by bacteria and is used to communicate both the cell density and the metabolic potential of the environment. The regulation of gene expression in response to changes in cell density is called quorum sensing. Catalyzes the transformation of S-ribosylhomocysteine (RHC) to homocysteine (HC) and 4,5-dihydroxy-2,3-pentadione (DPD). This chain is S-ribosylhomocysteine lyase, found in Streptococcus sanguinis (strain SK36).